Reading from the N-terminus, the 1054-residue chain is CCAAT/enhancer-binding protein zeta (1054 aa).

The segment covering 1-20 has biased composition (basic and acidic residues); the sequence is MAAVKEPLEFHAKRPWRPEE. 2 disordered regions span residues 1-42 and 102-160; these read MAAV…GFSL and VEED…PKVK. Residues 21–34 show a composition bias toward acidic residues; sequence AVEDPDEEDEDNTS. Residues 109–120 are compositionally biased toward basic and acidic residues; that stretch reads EKENSSKKEVKI. Phosphoserine is present on serine 113. Polar residues predominate over residues 124-138; the sequence is NNKNTAESQRTSVNK. Position 629 is a phosphoserine (serine 629). Lysine 695 carries the N6-acetyllysine modification. Residue serine 835 is modified to Phosphoserine. 2 disordered regions span residues 873 to 902 and 915 to 969; these read RTKG…DEVS and DEDG…KKRN. Acidic residues-rich tracts occupy residues 882-902 and 915-933; these read LDED…DEVS and DEDG…ESVP. Residues serine 959, serine 973, and serine 978 each carry the phosphoserine modification. Residues 1031 to 1054 are disordered; the sequence is IIKKKKHFKKKRIKTTQKTKKQRK.

Belongs to the CBF/MAK21 family.

Its subcellular location is the nucleus. Stimulates transcription from the HSP70 promoter. In Homo sapiens (Human), this protein is CCAAT/enhancer-binding protein zeta (CEBPZ).